An 812-amino-acid polypeptide reads, in one-letter code: Collagen-like protein 5 (812 aa).

2 N-linked (GlcNAc...) asparagine; by host glycosylation sites follow: Asn13 and Asn83. Collagen-like domains follow at residues 69 to 128 (GASG…KGDD), 143 to 502 (GEKG…KGDN), and 506 to 565 (GETG…KGEA). A disordered region spans residues 71–568 (SGAQGVKGDP…PGIKGEAGTN (498 aa)). 4 stretches are compositionally biased toward basic and acidic residues: residues 88–112 (TKGEKGDKGDKGSKGDNGEKGEKGD), 121–435 (SKGD…ETGS), 444–523 (SKGD…KGIK), and 531–561 (VKGDKGSKGDKGDLGDTGIKGDKGEKGDPGI). Residue Asn502 is glycosylated (N-linked (GlcNAc...) asparagine; by host). Residues Asn637, Asn658, and Asn667 are each glycosylated (N-linked (GlcNAc...) asparagine; by host). The disordered stretch occupies residues 730 to 802 (GQARTNGAST…VSASGGRGGD (73 aa)). A compositionally biased stretch (gly residues) spans 752-765 (FGGGGGGASGFAKG).

Post-translationally, may be hydroxylated on lysine by the viral-encoded procollagen-lysine,2-oxoglutarate 5-dioxygenase.

It is found in the virion. Functionally, may participate in the formation of a layer of cross-linked glycosylated fibrils at the viral surface thus giving it a hairy-like appearance. The protein is Collagen-like protein 5 of Acanthamoeba polyphaga (Amoeba).